The chain runs to 37 residues: Esculentin-2B (37 aa).

C31 and C37 form a disulfide bridge.

Belongs to the frog skin active peptide (FSAP) family. Esculentin subfamily. In terms of tissue distribution, expressed by the skin glands.

The protein resides in the secreted. Its function is as follows. Shows antibacterial activity against representative Gram-negative and Gram-positive bacterial species, and hemolytic activity. The polypeptide is Esculentin-2B (Pelophylax lessonae (Pool frog)).